The following is a 974-amino-acid chain: Short transient receptor potential channel 4 (974 aa).

The Cytoplasmic portion of the chain corresponds to M1–R324. 4 ANK repeats span residues L29–K60, R71–N93, V96–H118, and P141–G165. The interval E87 to H172 is multimerization domain. Zn(2+)-binding residues include H172, C176, C178, and C181. Residues L223–R260 adopt a coiled-coil conformation. The segment at D254–P304 is multimerization domain. Residues H325 to I359 constitute an intramembrane region (discontinuously helical). Topologically, residues R360 to P362 are cytoplasmic. The helical transmembrane segment at F363 to A383 threads the bilayer. Residues S384–E403 are Extracellular-facing. The helical transmembrane segment at W404–I418 threads the bilayer. Ca(2+) contacts are provided by E417, Q420, N435, and D438. Topologically, residues K419 to D432 are cytoplasmic. Residues W433–I453 traverse the membrane as a helical segment. The Extracellular portion of the chain corresponds to V454–L475. Residues V476 to A498 traverse the membrane as a helical segment. Residues N499 to R511 lie on the Cytoplasmic side of the membrane. The helical transmembrane segment at M512 to L534 threads the bilayer. Residues N535 to T599 lie on the Extracellular side of the membrane. C549 and C554 are disulfide-bonded. A helical membrane pass occupies residues M600–M620. Residues M615–L974 are interaction with ITPR1, ITPR2 and ITPR3. The Cytoplasmic portion of the chain corresponds to N621–L974. A disordered region spans residues A765 to R787. Residues S773–K784 are compositionally biased toward basic and acidic residues. Y956 and Y969 each carry phosphotyrosine; by FYN. Positions T972–L974 are PDZ-binding domain.

This sequence belongs to the transient receptor (TC 1.A.4) family. STrpC subfamily. TRPC4 sub-subfamily. As to quaternary structure, homotetramer. Heterotetramer with TRPC1 and/or TRPC5. Forms a heteromeric ion channel with TRPC1, with a 1:3 TRPC1:TRPC4 stoichiometry. Interacts with TRPC4AP. Isoform alpha but not isoform beta interacts with ITPR1, ITPR2 and ITPR3. Interacts with NHERF1. Interacts with MX1 and RNF24. Interacts (via CIRB domain) with SESTD1 (via the spectrin 1 repeat) and SPTBN5 (via C-terminus). Interacts with CDH5 and CTNNB1. Interacts (via protein 4.1-binding domain) with EPB41L2. Interacts with PLSCR1. As to expression, abundantly expressed in brain (hippocampal CA1 pyramidal neurons, dentate gyrus granule cells, and cerebral cortical neurons, and in the septal nuclei and the mitral layer of olfactory bulb). Lower levels are detected in other tissues.

The protein resides in the cell membrane. The enzyme catalyses Ca(2+)(in) = Ca(2+)(out). The catalysed reaction is Na(+)(in) = Na(+)(out). It catalyses the reaction Li(+)(in) = Li(+)(out). It carries out the reaction Cs(+)(in) = Cs(+)(out). With respect to regulation, may be operated by a phosphatidylinositol second messenger system activated by receptor tyrosine kinases or G-protein coupled receptors. May be activated by intracellular calcium store depletion. Its function is as follows. Forms a receptor-activated non-selective calcium permeant cation channel. Acts as a cell-cell contact-dependent endothelial calcium entry channel. Forms a homomeric ion channel or a heteromeric ion channel with TRPC1; the heteromeric ion channel has reduced calcium permeability compared to the homomeric channel. Also permeable to monovalent ions including sodium, lithium and cesium ions. The sequence is that of Short transient receptor potential channel 4 (Trpc4) from Mus musculus (Mouse).